We begin with the raw amino-acid sequence, 401 residues long: ATP phosphoribosyltransferase regulatory subunit (401 aa).

It belongs to the class-II aminoacyl-tRNA synthetase family. HisZ subfamily. Heteromultimer composed of HisG and HisZ subunits.

Its subcellular location is the cytoplasm. The protein operates within amino-acid biosynthesis; L-histidine biosynthesis; L-histidine from 5-phospho-alpha-D-ribose 1-diphosphate: step 1/9. Its function is as follows. Required for the first step of histidine biosynthesis. May allow the feedback regulation of ATP phosphoribosyltransferase activity by histidine. In Cyanothece sp. (strain PCC 7425 / ATCC 29141), this protein is ATP phosphoribosyltransferase regulatory subunit.